Reading from the N-terminus, the 333-residue chain is tRNA N6-adenosine threonylcarbamoyltransferase (333 aa).

Positions 111 and 115 each coordinate Fe cation. Substrate contacts are provided by residues 134–138 (LVSGG), D167, G180, and N272. D300 is a binding site for Fe cation.

The protein belongs to the KAE1 / TsaD family. Fe(2+) is required as a cofactor.

The protein localises to the cytoplasm. The enzyme catalyses L-threonylcarbamoyladenylate + adenosine(37) in tRNA = N(6)-L-threonylcarbamoyladenosine(37) in tRNA + AMP + H(+). In terms of biological role, required for the formation of a threonylcarbamoyl group on adenosine at position 37 (t(6)A37) in tRNAs that read codons beginning with adenine. Is involved in the transfer of the threonylcarbamoyl moiety of threonylcarbamoyl-AMP (TC-AMP) to the N6 group of A37, together with TsaE and TsaB. TsaD likely plays a direct catalytic role in this reaction. The sequence is that of tRNA N6-adenosine threonylcarbamoyltransferase from Hamiltonella defensa subsp. Acyrthosiphon pisum (strain 5AT).